An 827-amino-acid chain; its full sequence is Rho GTPase-activating protein 6 (827 aa).

The PH domain maps to 18 to 125; sequence TVYKSGPLFI…WKAALEQALA (108 aa). The region spanning 172-371 is the Rho-GAP domain; that stretch reads LALEEIDGSP…ALLEDYGNMI (200 aa). Disordered stretches follow at residues 379 to 437 and 517 to 561; these read CSTS…SDYA and YTTS…SSGN. The span at 401-412 shows a compositional bias: basic and acidic residues; that stretch reads IVVKHPDLHTLD. Acidic residues predominate over residues 413 to 423; that stretch reads IEEGETDDDND. Residues 517–543 are compositionally biased toward polar residues; the sequence is YTTSAEKPASKTTGSSTVNSKRSSSWG. Positions 560 to 684 form a coiled coil; that stretch reads GNDELLIQRL…HQLSQQRQHH (125 aa).

In terms of biological role, acts as a GTPase activator for the Rac-type GTPase by converting it to an inactive GDP-bound state. The sequence is that of Rho GTPase-activating protein 6 (ROPGAP6) from Arabidopsis thaliana (Mouse-ear cress).